The following is a 118-amino-acid chain: MRQNQLIEKITNEQLRTDIPDFRAGDTVRVHARVVEGTRERIQLFEGVVIKRHGSGISETYTVRKISNGVGVERTFPLHTPRVAAIDVVRQGRVRRAKLYYLRNLHGKAARIPERRRG.

Belongs to the bacterial ribosomal protein bL19 family.

Its function is as follows. This protein is located at the 30S-50S ribosomal subunit interface and may play a role in the structure and function of the aminoacyl-tRNA binding site. This chain is Large ribosomal subunit protein bL19, found in Lactiplantibacillus plantarum (strain ATCC BAA-793 / NCIMB 8826 / WCFS1) (Lactobacillus plantarum).